The primary structure comprises 274 residues: Dermonecrotic toxin LspiSicTox-betaIII1 G (274 aa).

The active site involves His-5. Positions 25 and 27 each coordinate Mg(2+). His-41 functions as the Nucleophile in the catalytic mechanism. 2 cysteine pairs are disulfide-bonded: Cys-45–Cys-51 and Cys-47–Cys-189. N-linked (GlcNAc...) asparagine glycosylation occurs at Asn-66. A Mg(2+)-binding site is contributed by Asp-85.

This sequence belongs to the arthropod phospholipase D family. Class II subfamily. It depends on Mg(2+) as a cofactor. As to expression, expressed by the venom gland.

Its subcellular location is the secreted. The enzyme catalyses an N-(acyl)-sphingosylphosphocholine = an N-(acyl)-sphingosyl-1,3-cyclic phosphate + choline. It catalyses the reaction an N-(acyl)-sphingosylphosphoethanolamine = an N-(acyl)-sphingosyl-1,3-cyclic phosphate + ethanolamine. It carries out the reaction a 1-acyl-sn-glycero-3-phosphocholine = a 1-acyl-sn-glycero-2,3-cyclic phosphate + choline. The catalysed reaction is a 1-acyl-sn-glycero-3-phosphoethanolamine = a 1-acyl-sn-glycero-2,3-cyclic phosphate + ethanolamine. In terms of biological role, dermonecrotic toxins cleave the phosphodiester linkage between the phosphate and headgroup of certain phospholipids (sphingolipid and lysolipid substrates), forming an alcohol (often choline) and a cyclic phosphate. This toxin acts on sphingomyelin (SM). It may also act on ceramide phosphoethanolamine (CPE), lysophosphatidylcholine (LPC) and lysophosphatidylethanolamine (LPE), but not on lysophosphatidylserine (LPS), and lysophosphatidylglycerol (LPG). It acts by transphosphatidylation, releasing exclusively cyclic phosphate products as second products. Induces dermonecrosis, hemolysis, increased vascular permeability, edema, inflammatory response, and platelet aggregation. This Loxosceles spinulosa (Recluse spider) protein is Dermonecrotic toxin LspiSicTox-betaIII1 G.